We begin with the raw amino-acid sequence, 536 residues long: MSFTNNTSSVDTSLSSSASSSIPASSSSAAASTSLSSSSVIPSSSSSMLSSSSATAISSSSSSSPLSSSSFTSPASSSFITSLVSSSSQQSSSSSASLTSSSSATLTSSSSASPTSSSSSHALSSSSSSLVASSSSSGMSSSSLSHSSSVPSSSSSYHSSSMTTSGLSSSASIVSSTYRDGPSIITLVSTSYVSEVVTPTTTNNWNSSSSFTSSTSSTPISSSYSSSGTLPSKSNKSSNHVGVVVGCSVAIPVGVVLILIGLGIFLWKRHQRSKRIKAERMQEVEEYGFNPNQPSNFRSPNRAPSTNNRYRGWNGSPTPAAGNNTNGRPVAPRPSAGAGGANPPAASQPGLLGGSSNSAGPIAAATAAGVGADASDAANTGGSFTRPQGARMVRPIGNPPDLSASNEAEATMPPSNGSNFSEGLSASPFESGPAVGAAGAAAEAAEHSGSGSDSYPEGPLATIPESDSESMASDLAGESSYGSRAALSSRSQSNLLSPTSTGASNQPNYSPFADNPSSSNVSIPRSSSEARRLNLF.

Disordered regions lie at residues 1–76 (MSFT…SPAS) and 204–237 (NWNSSSSFTSSTSSTPISSSYSSSGTLPSKSNKS). Composition is skewed to low complexity over residues 7-76 (TSSV…SPAS) and 204-234 (NWNSSSSFTSSTSSTPISSSYSSSGTLPSKS). A helical transmembrane segment spans residues 247–267 (CSVAIPVGVVLILIGLGIFLW). 2 disordered regions span residues 287–354 (YGFN…LLGG) and 373–536 (DASD…LNLF). The span at 290–326 (NPNQPSNFRSPNRAPSTNNRYRGWNGSPTPAAGNNTN) shows a compositional bias: polar residues. Residues 327–350 (GRPVAPRPSAGAGGANPPAASQPG) are compositionally biased toward low complexity. Residues 351–371 (LLGGSSNSAGPIAAATAAGVG) form a helical membrane-spanning segment. Positions 403 to 424 (SASNEAEATMPPSNGSNFSEGL) are enriched in polar residues. Low complexity predominate over residues 430 to 454 (ESGPAVGAAGAAAEAAEHSGSGSDS). Residues 480–509 (SYGSRAALSSRSQSNLLSPTSTGASNQPNY) show a composition bias toward polar residues. Positions 517 to 527 (SSSNVSIPRSS) are enriched in low complexity.

Its subcellular location is the membrane. This is an uncharacterized protein from Schizosaccharomyces pombe (strain 972 / ATCC 24843) (Fission yeast).